The chain runs to 143 residues: Large ribosomal subunit protein bL17 (143 aa).

Residues 124–133 (GAGDRARLEA) are compositionally biased toward basic and acidic residues. The tract at residues 124–143 (GAGDRARLEAEGTDAEAAAA) is disordered.

The protein belongs to the bacterial ribosomal protein bL17 family. As to quaternary structure, part of the 50S ribosomal subunit. Contacts protein L32.

The chain is Large ribosomal subunit protein bL17 from Mesorhizobium japonicum (strain LMG 29417 / CECT 9101 / MAFF 303099) (Mesorhizobium loti (strain MAFF 303099)).